Here is a 900-residue protein sequence, read N- to C-terminus: Alanine--tRNA ligase (900 aa).

Zn(2+)-binding residues include His604, His608, Cys708, and His712.

The protein belongs to the class-II aminoacyl-tRNA synthetase family. Zn(2+) serves as cofactor.

It is found in the cytoplasm. The enzyme catalyses tRNA(Ala) + L-alanine + ATP = L-alanyl-tRNA(Ala) + AMP + diphosphate. Catalyzes the attachment of alanine to tRNA(Ala) in a two-step reaction: alanine is first activated by ATP to form Ala-AMP and then transferred to the acceptor end of tRNA(Ala). Also edits incorrectly charged Ser-tRNA(Ala) and Gly-tRNA(Ala) via its editing domain. The sequence is that of Alanine--tRNA ligase from Saccharolobus islandicus (strain M.14.25 / Kamchatka #1) (Sulfolobus islandicus).